The sequence spans 20 residues: Protease inhibitor (20 aa).

In terms of assembly, monomer. Post-translationally, glycosylated. Stored in epidermis and secreted into the hemolymph and cuticle. Not detected in the interior of the epidermis, fat body cells or columnar or goblet cells of the midgut epithelium (at protein level).

Functionally, inhibits trypsin and chymotrypsin. This is Protease inhibitor from Antheraea mylitta (Tasar silkworm).